A 336-amino-acid polypeptide reads, in one-letter code: NmrA-like family domain-containing oxidoreductase FrzB (336 aa).

NADP(+) is bound at residue lysine 135.

This sequence belongs to the NmrA-type oxidoreductase family.

It carries out the reaction 4-{[(2S,5S)-5-[(4-hydroxyphenyl)methyl]-2,5-dihydropyrazin-2-yl]methyl}phenol + 2 NADPH + 2 H(+) = (S,S)-2,5-di-(p-hydroxybenzyl)piperazine + 2 NADP(+). It functions in the pathway secondary metabolite biosynthesis. Functionally, nmrA-like family domain-containing oxidoreductase; part of the gene cluster that mediates the biosynthesis of the alkaloid (-)-FR901483, a potent immunosuppressant that shows efficacy in animal models and a probable inhibitor of purine nucleotide biosynthesis by targeting phosphoribosylpyrophosphate amidotransferase (PPAT). Within the pathway, FrzB catalyzes the reduction of 4-{[(2S,5S)-5-[(4-hydroxyphenyl)methyl]-2,5-dihydropyrazin-2-yl]methyl}phenol to produce the (S,S)-dityrosyl-piperazine intermediate. The biosynthesis of (-)-FR901483 starts with the condensation of two L-tyrosines to yield (S,S)-dityrosyl-piperazine. This process occurs in 3 steps with the non-canonical nonribosomal peptide synthetase FrzA catalyzing the reduction of L-tyrosine into L-tyrosinal, the spontaneous condensation of 2 L-tyrosinal units, and the subsequent reduction by the NmrA-like family domain-containing oxidoreductase FrzB. The cytochrome P450 monooxygenase FrzC then performs coupling between N10 and C1' to morph the piperazine into a 1,4-diazabicyclo[3.2.1]octane spiro-fused to a 2,5-cyclohexadienone. The dienone portion is further reduced to cyclohexanone by the flavin-dependent reductase FrzD. The methyltranserases (MTs) FrzE and FrzF are then involved in the methylation at the C10' amine and the C4 phenolic oxygen, respectively. The order of the two MTs appear to be interchangeable. Cleavage of the C9-N10' bond by the dioxygenase FrzG then leads to formation of a conjugated iminium. In addition to the oxidation of C9, an additional dehydrogenation between C7 and C8 can occur to give a likely shunt product. The next biosynthetic step is the intramolecular aldol condensation catalyzed by the newly identified aldolase FrzH to yield an aza-tricyclic product with the formation of a C9-C3' bond. The short-chain dehydrogenase/reductase FrzI then produces dephospho-(-)-FR901483 that is phosphorylated at C4'-OH into (-)-FR901483 by the phosphotransferase FrzJ. This is NmrA-like family domain-containing oxidoreductase FrzB from Cladobotryum sp.